The chain runs to 127 residues: Polyadenylate-binding protein-interacting protein 2 (127 aa).

Over residues 1-13 (MKDPSRSSTSPSI) the composition is skewed to polar residues. The tract at residues 1–24 (MKDPSRSSTSPSIINEDVIINGHS) is disordered. Residues 22–75 (GHSHEDDNPFAEYMWMENEEEFNRQIEEELWEEEFIERCFQEMLEEEEEHEWFI) are PABPC1-interacting motif-1 (PAM1). Positions 105–120 (LVVKSNLNPNAKEFVP) are PABPC1-interacting motif-2 (PAM2).

Belongs to the PAIP2 family. Interacts with the second and third RRM domains and C-terminus regions of PABPC1 in a 2:1 stoichiometry. In terms of processing, ubiquitinated, leading to its degradation by the proteasome. In terms of tissue distribution, expressed at highest level in testis, but also abundant in brain, cervix, lung, ovary, placenta, adipose tissue, thymus and thyroid.

The protein localises to the cytoplasm. Acts as a repressor in the regulation of translation initiation of poly(A)-containing mRNAs. Its inhibitory activity on translation is mediated via its action on PABPC1. Displaces the interaction of PABPC1 with poly(A) RNA and competes with PAIP1 for binding to PABPC1. Its association with PABPC1 results in disruption of the cytoplasmic poly(A) RNP structure organization. The chain is Polyadenylate-binding protein-interacting protein 2 (PAIP2) from Homo sapiens (Human).